The primary structure comprises 192 residues: ADP-ribose glycohydrolase AF_1521 (192 aa).

The region spanning 1–192 is the Macro domain; it reads MEVLFEAKVG…VALKVFERSL (192 aa). Substrate is bound by residues 19-21, 32-34, 39-44, and 140-146; these read GDI, AAN, HGGGVA, and VSAGIYG.

It catalyses the reaction 5-O-(ADP-D-ribosyl)-L-glutamyl-[protein] + H2O = L-glutamyl-[protein] + ADP-D-ribose + H(+). The enzyme catalyses 4-O-(ADP-D-ribosyl)-L-aspartyl-[protein] + H2O = L-aspartyl-[protein] + ADP-D-ribose + H(+). It carries out the reaction alpha-NAD(+) + H2O = ADP-D-ribose + nicotinamide + H(+). Removes ADP-ribose from aspartate and glutamate residues in proteins bearing a single ADP-ribose moiety. Inactive towards proteins bearing poly-ADP-ribose. Catalyzes removal of a phosphate group from ADP-ribose 1''-phosphate (Appr1p), but with low efficiency. This is ADP-ribose glycohydrolase AF_1521 from Archaeoglobus fulgidus (strain ATCC 49558 / DSM 4304 / JCM 9628 / NBRC 100126 / VC-16).